Consider the following 203-residue polypeptide: VEL1-related protein SPBPB2B2.15 (203 aa).

Residues 1–16 (MFKNLIFLFFIGLATA) form the signal peptide.

This sequence belongs to the VEL1 family.

The protein localises to the cytoplasm. It is found in the cytosol. This is VEL1-related protein SPBPB2B2.15 from Schizosaccharomyces pombe (strain 972 / ATCC 24843) (Fission yeast).